Reading from the N-terminus, the 778-residue chain is Gelsolin (778 aa).

Positions 1-23 (MGKQGFGYIFLTIFCTMALKLNC) are cleaved as a signal peptide. An actin-severing region spans residues 49–172 (MVEHAEFSKA…YKAGGVASGF (124 aa)). The Gelsolin-like 1 repeat unit spans residues 72–154 (FDLVPVPKNL…VQGHESSTFL (83 aa)). Ca(2+) contacts are provided by G88, D89, E120, D132, G137, and A139. The interval 119-122 (DERG) is actin-actin interfilament contact point. 158-165 (KSGIKYKA) serves as a coordination point for a 1,2-diacyl-sn-glycero-3-phospho-(1D-myo-inositol-4,5-bisphosphate). V168 is a binding site for Ca(2+). An a 1,2-diacyl-sn-glycero-3-phospho-(1D-myo-inositol-4,5-bisphosphate)-binding site is contributed by 184–192 (RLLQVKGRR). The stretch at 193-266 (TVRATEVPVS…SEEGAEREEM (74 aa)) is one Gelsolin-like 2 repeat. Positions 209 and 210 each coordinate Ca(2+). C211 and C224 are oxidised to a cystine. E232, D282, E325, D326, E350, G467, D468, E498, D510, G515, P517, T547, N587, D588, E610, D692, D693, and E715 together coordinate Ca(2+). 2 Gelsolin-like repeats span residues 313–385 (DENP…TPLF) and 451–532 (SEKV…PHLM). The interval 430–778 (AAQHGMEDDG…LQRAMADVDV (349 aa)) is actin-binding, Ca-sensitive. 2 Gelsolin-like repeats span residues 574 to 638 (AVEL…DNFW) and 677 to 752 (IEEV…PPTF).

It belongs to the villin/gelsolin family. Binds to actin and to fibronectin. In terms of tissue distribution, highly expressed in homogene cells of the basilar papilla. Also detected in subcutaneous layer of the skin.

The protein localises to the secreted. It localises to the cytoplasm. It is found in the cytoskeleton. Functionally, calcium-regulated, actin-modulating protein that binds to the plus (or barbed) ends of actin monomers or filaments, preventing monomer exchange (end-blocking or capping). It can promote the assembly of monomers into filaments (nucleation) as well as sever filaments already formed. Plays a role in ciliogenesis. This is Gelsolin (GSN) from Gallus gallus (Chicken).